The following is a 454-amino-acid chain: COBRA-like protein 6 (454 aa).

Residues 1–24 (MGAMLNLLLVVTVILCSILSPTRF) form the signal peptide. N-linked (GlcNAc...) asparagine glycosylation is found at Asn-104, Asn-191, Asn-320, Asn-355, and Asn-391. A lipid anchor (GPI-anchor amidated serine) is attached at Ser-429. Residues 430–454 (SSSSAVISSVSVVFCFLLHHLLLLV) constitute a propeptide, removed in mature form.

It belongs to the COBRA family. As to expression, expressed in flowers and siliques.

The protein localises to the cell membrane. This is COBRA-like protein 6 (COBL6) from Arabidopsis thaliana (Mouse-ear cress).